Here is a 202-residue protein sequence, read N- to C-terminus: dITP/XTP pyrophosphatase (202 aa).

T9–K14 lines the substrate pocket. Residue D73 is the Proton acceptor of the active site. D73 provides a ligand contact to Mg(2+). Substrate-binding positions include S74, F158–D161, K181, and H186–R187.

This sequence belongs to the HAM1 NTPase family. Homodimer. Requires Mg(2+) as cofactor.

It carries out the reaction XTP + H2O = XMP + diphosphate + H(+). The catalysed reaction is dITP + H2O = dIMP + diphosphate + H(+). The enzyme catalyses ITP + H2O = IMP + diphosphate + H(+). In terms of biological role, pyrophosphatase that catalyzes the hydrolysis of nucleoside triphosphates to their monophosphate derivatives, with a high preference for the non-canonical purine nucleotides XTP (xanthosine triphosphate), dITP (deoxyinosine triphosphate) and ITP. Seems to function as a house-cleaning enzyme that removes non-canonical purine nucleotides from the nucleotide pool, thus preventing their incorporation into DNA/RNA and avoiding chromosomal lesions. This is dITP/XTP pyrophosphatase from Lactobacillus acidophilus (strain ATCC 700396 / NCK56 / N2 / NCFM).